Reading from the N-terminus, the 94-residue chain is MEIKRTASAGTMESSDIMITVKPSNNGIKIELKSDVEKQFGNQVKKIIKNTIEGMGVKNVYIRAQDRGALDYAIKARTRTALERASKGAEEIEK.

Serine 14 carries the O-(phosphoribosyl dephospho-coenzyme A)serine modification.

The protein belongs to the CitD family. Oligomer with a subunit composition of (alpha,beta,gamma)6.

Its subcellular location is the cytoplasm. Its function is as follows. Covalent carrier of the coenzyme of citrate lyase. The polypeptide is Citrate lyase acyl carrier protein (Halothermothrix orenii (strain H 168 / OCM 544 / DSM 9562)).